Reading from the N-terminus, the 900-residue chain is DNA polymerase nu (900 aa).

The span at 60–75 shows a compositional bias: basic and acidic residues; that stretch reads LEDRKTQSPEKKDLKS. 2 disordered regions span residues 60-90 and 863-900; these read LEDRKTQSPEKKDLKSLRSQTSRGSAKLSPQ and GPPPGPCRTESPSNSLAAPGSPASTQPPPLHFSPSFCL. Over residues 76 to 90 the composition is skewed to polar residues; it reads LRSQTSRGSAKLSPQ.

Belongs to the DNA polymerase type-A family. Interacts with FANCD2, FANCI, PCNA, RAD51 and HELQ. As to expression, highly expressed in testis and heart. Weakly expressed in skeletal muscle.

Its subcellular location is the nucleus. It catalyses the reaction DNA(n) + a 2'-deoxyribonucleoside 5'-triphosphate = DNA(n+1) + diphosphate. With respect to regulation, inhibited by ddTTP. DNA polymerase with very low fidelity that catalyzes considerable misincorporation by inserting dTTP opposite a G template, and dGTP opposite a T template. Is the least accurate of the DNA polymerase A family (i.e. POLG, POLN and POLQ). Can perform accurate translesion DNA synthesis (TLS) past a 5S-thymine glycol. Can perform efficient strand displacement past a nick or a gap and gives rise to an amount of product similar to that on non-damaged template. Has no exonuclease activity. Error-prone DNA polymerase that preferentially misincorporates dT regardless of template sequence. May play a role in TLS during interstrand cross-link (ICL) repair. May be involved in TLS when genomic replication is blocked by extremely large major groove DNA lesions. May function in the bypass of some DNA-protein and DNA-DNA cross-links. May have a role in cellular tolerance to DNA cross-linking agents. Involved in the repair of DNA cross-links and double-strand break (DSB) resistance. Participates in FANCD2-mediated repair. Forms a complex with HELQ helicase that participates in homologous recombination (HR) repair and is essential for cellular protection against DNA cross-links. This is DNA polymerase nu (POLN) from Homo sapiens (Human).